A 119-amino-acid polypeptide reads, in one-letter code: HTH-type transcriptional regulator SarX (119 aa).

A DNA-binding region (H-T-H motif) is located at residues 55 to 78 (LKTAMDELDLSRTKLLVSIRRLIE).

The protein belongs to the SarA family.

It localises to the cytoplasm. Involved in the regulation of virulence genes. Acts as a repressor of the agr locus and consequently targets genes regulated by the agr system such as sspA, hla and hlb. Binds directly to the agr promoter region. The protein is HTH-type transcriptional regulator SarX (sarX) of Staphylococcus aureus (strain USA300).